A 552-amino-acid polypeptide reads, in one-letter code: Hyaluronan synthase 2 (552 aa).

Residues 1–11 (MHCERFLCILR) are Cytoplasmic-facing. A helical membrane pass occupies residues 12–32 (IIGTTLFGVSLLLGITAAYIV). Over 33–45 (GYQFIQTDNYYFS) the chain is Extracellular. A helical membrane pass occupies residues 46 to 66 (FGLYGAFLASHLIIQSLFAFL). The Cytoplasmic portion of the chain corresponds to 67-374 (EHRKMKKSLE…NAMWFHKHHL (308 aa)). Thr110 is subject to Phosphothreonine. Lys190 is covalently cross-linked (Glycyl lysine isopeptide (Lys-Gly) (interchain with G-Cter in ubiquitin)). O-linked (GlcNAc) serine glycosylation occurs at Ser221. The residue at position 328 (Thr328) is a Phosphothreonine. Residues 375–395 (WMTYEAIITGFFPFFLIATVI) traverse the membrane as a helical segment. At 396–402 (QLFYRGK) the chain is on the extracellular side. The helical transmembrane segment at 403-423 (IWNILLFLLTVQLVGLIKSSF) threads the bilayer. Over 424–429 (ASCLRG) the chain is Cytoplasmic. Residues 430 to 450 (NIVMVFMSLYSVLYMSSLLPA) form a helical membrane-spanning segment. Residues 451–475 (KMFAIATINKAGWGTSGRKTIVVNF) are Extracellular-facing. A helical membrane pass occupies residues 476-496 (IGLIPVSVWFTILLGGVIFTI). At 497–510 (YKESKRPFSESKQT) the chain is on the cytoplasmic side. Residues 511–531 (VLIVGTLLYACYWVMLLTLYV) form a helical membrane-spanning segment. At 532 to 552 (VLINKCGRRKKGQQYDMVLDV) the chain is on the extracellular side.

It belongs to the NodC/HAS family. As to quaternary structure, homodimer; dimerization promotes enzymatic activity. Forms heterodimer with HAS3. Forms heterodimer with HAS1. Requires Mg(2+) as cofactor. In terms of processing, phosphorylation at Thr-328 is essential for hyaluronan synthase activity. Phosphorylation at Thr-110 is required for transport from ER to Golgi. Post-translationally, O-GlcNAcylation at Ser-221 increases the stability of HAS2 and plasma membrane localization. Ubiquitination at Lys-190; this ubiquitination is essential for hyaluronan synthase activity and homo- or hetero-oligomerization. Can also be poly-ubiquitinated. Deubiquitinated by USP17 and USP4. USP17 efficiently removes 'Lys-63'- and 'Lys-48'-linked polyubiquitin chains, whereas USP4 preferentially removes monoubiquitination and, partially, both 'Lys-63'- and 'Lys-48'-linked polyubiquitin chain. Expressed in fibroblasts.

The protein localises to the cell membrane. It is found in the endoplasmic reticulum membrane. It localises to the vesicle. Its subcellular location is the golgi apparatus membrane. The protein resides in the lysosome. It carries out the reaction [hyaluronan](n) + UDP-N-acetyl-alpha-D-glucosamine = N-acetyl-beta-D-glucosaminyl-(1-&gt;4)-[hyaluronan](n) + UDP + H(+). The catalysed reaction is N-acetyl-beta-D-glucosaminyl-(1-&gt;4)-[hyaluronan](n) + UDP-alpha-D-glucuronate = [hyaluronan](n+1) + UDP + H(+). The protein operates within glycan biosynthesis; hyaluronan biosynthesis. Its activity is regulated as follows. Regulated by several post-translational modifications such as ubiquitination/deubiquitination, phosphorylation and O-GlcNAcylation. The enzymatic activity depends on the availability of UDP-GlcUA and UDP-GlcNAc. Its function is as follows. Catalyzes the addition of GlcNAc or GlcUA monosaccharides to the nascent hyaluronan polymer. Therefore, it is essential to hyaluronan synthesis a major component of most extracellular matrices that has a structural role in tissues architectures and regulates cell adhesion, migration and differentiation. This is one of three isoenzymes responsible for cellular hyaluronan synthesis and it is particularly responsible for the synthesis of high molecular mass hyaluronan. This chain is Hyaluronan synthase 2, found in Homo sapiens (Human).